Reading from the N-terminus, the 109-residue chain is Large ribosomal subunit protein uL22 (109 aa).

Belongs to the universal ribosomal protein uL22 family. Part of the 50S ribosomal subunit.

Its function is as follows. This protein binds specifically to 23S rRNA; its binding is stimulated by other ribosomal proteins, e.g. L4, L17, and L20. It is important during the early stages of 50S assembly. It makes multiple contacts with different domains of the 23S rRNA in the assembled 50S subunit and ribosome. Functionally, the globular domain of the protein is located near the polypeptide exit tunnel on the outside of the subunit, while an extended beta-hairpin is found that lines the wall of the exit tunnel in the center of the 70S ribosome. This chain is Large ribosomal subunit protein uL22, found in Paraburkholderia phymatum (strain DSM 17167 / CIP 108236 / LMG 21445 / STM815) (Burkholderia phymatum).